We begin with the raw amino-acid sequence, 263 residues long: tRNA pseudouridine synthase A (263 aa).

Asp-53 serves as the catalytic Nucleophile. Substrate is bound at residue Tyr-111. The segment at 232–263 (TAPGHGLISGRSNMTNGKLENNKTTNPCVTKY) is disordered. Positions 241–263 (GRSNMTNGKLENNKTTNPCVTKY) are enriched in polar residues.

It belongs to the tRNA pseudouridine synthase TruA family. As to quaternary structure, homodimer.

It catalyses the reaction uridine(38/39/40) in tRNA = pseudouridine(38/39/40) in tRNA. In terms of biological role, formation of pseudouridine at positions 38, 39 and 40 in the anticodon stem and loop of transfer RNAs. The polypeptide is tRNA pseudouridine synthase A (Halalkalibacterium halodurans (strain ATCC BAA-125 / DSM 18197 / FERM 7344 / JCM 9153 / C-125) (Bacillus halodurans)).